An 864-amino-acid polypeptide reads, in one-letter code: Mitochondrial 15S rRNA processing factor CCM1 (864 aa).

The N-terminal 76 residues, 1–76, are a transit peptide targeting the mitochondrion; sequence MYMARCGPKN…REFSNTLKER (76 aa). PPR repeat units follow at residues 319–353 and 356–390; these read NKQN…STKH and DICT…NIKP.

It belongs to the CCM1 family. In terms of assembly, binds to mitochondrial small subunit 15S rRNA.

The protein resides in the mitochondrion. Regulates mitochondrial small subunit maturation by controlling 15S rRNA 5'-end processing. Localizes to the 5' precursor of the 15S rRNA in a position that is subsequently occupied by mS47 in the mature yeast mtSSU. Uses structure and sequence-specific RNA recognition, binding to a single-stranded region of the precursor and specifically recognizing bases -6 to -1. The exchange of Ccm1 for mS47 is coupled to the irreversible removal of precursor rRNA that is accompanied by conformational changes of the mitoribosomal proteins uS5m and mS26. These conformational changes signal completion of 5'-end rRNA processing through protection of the mature 5'-end of the 15S rRNA and stabilization of mS47. The removal of the 5' precursor together with the dissociation of Ccm1 may be catalyzed by the 5'-3' exoribonuclease Pet127. Involved in the specific removal of group I introns in mitochondrial encoded transcripts. This Saccharomyces cerevisiae (strain Lalvin EC1118 / Prise de mousse) (Baker's yeast) protein is Mitochondrial 15S rRNA processing factor CCM1 (CCM1).